The sequence spans 288 residues: Signal recognition particle receptor FtsY (288 aa).

GTP contacts are provided by residues 93–100, 175–179, and 233–236; these read GINGTGKT, DTAGR, and TKLD.

The protein belongs to the GTP-binding SRP family. FtsY subfamily. Part of the signal recognition particle protein translocation system, which is composed of SRP and FtsY.

The protein resides in the cell membrane. The protein localises to the cytoplasm. The catalysed reaction is GTP + H2O = GDP + phosphate + H(+). Involved in targeting and insertion of nascent membrane proteins into the cytoplasmic membrane. Acts as a receptor for the complex formed by the signal recognition particle (SRP) and the ribosome-nascent chain (RNC). The sequence is that of Signal recognition particle receptor FtsY from Thermoplasma acidophilum (strain ATCC 25905 / DSM 1728 / JCM 9062 / NBRC 15155 / AMRC-C165).